A 295-amino-acid chain; its full sequence is Uridine and thymidine phosphorylase (295 aa).

Phosphate-binding positions include Arg81 and 125–128 (RLGT). Gln203 and Arg205 together coordinate substrate.

It belongs to the PNP/UDP phosphorylase family. In terms of tissue distribution, expressed in hypodermis, pharynx, spermatheca and gonad.

The enzyme catalyses uridine + phosphate = alpha-D-ribose 1-phosphate + uracil. It carries out the reaction thymidine + phosphate = 2-deoxy-alpha-D-ribose 1-phosphate + thymine. It catalyses the reaction 2'-deoxyuridine + phosphate = 2-deoxy-alpha-D-ribose 1-phosphate + uracil. The protein operates within pyrimidine metabolism; UMP biosynthesis via salvage pathway; uracil from uridine (phosphorylase route): step 1/1. It functions in the pathway pyrimidine metabolism; dTMP biosynthesis via salvage pathway; dTMP from thymine: step 1/2. In terms of biological role, catalyzes the reversible phosphorylytic cleavage of uridine and thymidine to uracil and ribose-phosphate or thymine and deoxyribose-1-phosphate. The produced molecules are then utilized as carbon and energy sources or in the rescue of pyrimidine bases for nucleotide synthesis. Required for normal lifespan. The protein is Uridine and thymidine phosphorylase of Caenorhabditis elegans.